Reading from the N-terminus, the 121-residue chain is Pro-glucagon (121 aa).

Positions 1-21 (MKGAQYLAGLLLLLFVQNSIC) are cleaved as a signal peptide. Positions 80 to 85 (SNGGSA) are excised as a propeptide.

It belongs to the glucagon family.

It is found in the secreted. Functionally, plays a key role in glucose metabolism and homeostasis. Regulates blood glucose by increasing gluconeogenesis and decreasing glycolysis. This Carassius auratus (Goldfish) protein is Pro-glucagon (gcg).